The primary structure comprises 170 residues: UPF0220 protein C8D2.02c (170 aa).

Transmembrane regions (helical) follow at residues 23 to 43, 54 to 74, 101 to 121, and 136 to 156; these read LGVY…VDAA, LHIT…IVIV, ILFI…TVFI, and MGSA…ALWI.

Belongs to the UPF0220 family.

The protein resides in the membrane. The polypeptide is UPF0220 protein C8D2.02c (Schizosaccharomyces pombe (strain 972 / ATCC 24843) (Fission yeast)).